The following is a 158-amino-acid chain: MQGNLSAWLVKHALIHRSLGFDYQGIETLQIKPGDWHSIAVILYVYGYNYLRSQCAYDVAPGGLLASVYHLTRIEYGVDQPEEVCIKVFAPRKDPRIPSVFWVWKSVDFQERESYDMLGISYDNHPRLKRILMPESWIGWPLRKDYIAPNFYEIQDAH.

Belongs to the complex I 30 kDa subunit family. As to quaternary structure, NDH is composed of at least 16 different subunits, 5 of which are encoded in the nucleus.

Its subcellular location is the plastid. The protein resides in the chloroplast thylakoid membrane. It carries out the reaction a plastoquinone + NADH + (n+1) H(+)(in) = a plastoquinol + NAD(+) + n H(+)(out). The enzyme catalyses a plastoquinone + NADPH + (n+1) H(+)(in) = a plastoquinol + NADP(+) + n H(+)(out). Its function is as follows. NDH shuttles electrons from NAD(P)H:plastoquinone, via FMN and iron-sulfur (Fe-S) centers, to quinones in the photosynthetic chain and possibly in a chloroplast respiratory chain. The immediate electron acceptor for the enzyme in this species is believed to be plastoquinone. Couples the redox reaction to proton translocation, and thus conserves the redox energy in a proton gradient. This is NAD(P)H-quinone oxidoreductase subunit J, chloroplastic from Helianthus annuus (Common sunflower).